The primary structure comprises 192 residues: Probable apo-citrate lyase phosphoribosyl-dephospho-CoA transferase (192 aa).

The protein belongs to the CitX family.

The enzyme catalyses apo-[citrate lyase ACP] + 2'-(5''-triphospho-alpha-D-ribosyl)-3'-dephospho-CoA = holo-[citrate lyase ACP] + diphosphate. Transfers 2-(5''-triphosphoribosyl)-3'-dephosphocoenzyme-A on a serine residue to the apo-acyl carrier protein (gamma chain) of the citrate lyase to yield holo-acyl carrier protein. This is Probable apo-citrate lyase phosphoribosyl-dephospho-CoA transferase from Streptococcus pyogenes serotype M3 (strain ATCC BAA-595 / MGAS315).